A 56-amino-acid polypeptide reads, in one-letter code: Large ribosomal subunit protein bL33 (56 aa).

It belongs to the bacterial ribosomal protein bL33 family.

This is Large ribosomal subunit protein bL33 from Halorhodospira halophila (strain DSM 244 / SL1) (Ectothiorhodospira halophila (strain DSM 244 / SL1)).